The following is a 134-amino-acid chain: ATP synthase epsilon chain (134 aa).

Belongs to the ATPase epsilon chain family. As to quaternary structure, F-type ATPases have 2 components, CF(1) - the catalytic core - and CF(0) - the membrane proton channel. CF(1) has five subunits: alpha(3), beta(3), gamma(1), delta(1), epsilon(1). CF(0) has three main subunits: a, b and c.

It is found in the cellular thylakoid membrane. Its function is as follows. Produces ATP from ADP in the presence of a proton gradient across the membrane. This Prochlorococcus marinus (strain MIT 9312) protein is ATP synthase epsilon chain.